Reading from the N-terminus, the 365-residue chain is Galactoside alpha-(1,2)-fucosyltransferase 1 (365 aa).

The Cytoplasmic portion of the chain corresponds to 1-8 (MWPLSHRH). Residues 9–25 (LCLAFLLVCVLSAISFF) traverse the membrane as a helical; Signal-anchor for type II membrane protein segment. Over 26–365 (LHIYQDSIRH…LSSLWTLAEP (340 aa)) the chain is Lumenal. N-linked (GlcNAc...) asparagine glycans are attached at residues asparagine 65, asparagine 301, and asparagine 327.

The protein belongs to the glycosyltransferase 11 family.

The protein localises to the golgi apparatus. It is found in the golgi stack membrane. It catalyses the reaction a beta-D-galactosyl-(1-&gt;4)-N-acetyl-beta-D-glucosaminyl derivative + GDP-beta-L-fucose = an alpha-L-Fuc-(1-&gt;2)-beta-D-Gal-(1-&gt;4)-beta-D-GlcNAc derivative + GDP + H(+). The catalysed reaction is a ganglioside GA1 + GDP-beta-L-fucose = a ganglioside Fuc-GA1 + GDP + H(+). The enzyme catalyses a beta-D-Gal-(1-&gt;3)-beta-D-GlcNAc-(1-&gt;3)-beta-D-Gal-(1-&gt;4)-beta-D-Glc-(1&lt;-&gt;1')-Cer(d18:1(4E)) + GDP-beta-L-fucose = alpha-L-fucosyl-(1-&gt;2)- beta-D-galactosyl-(1-&gt;3)-N-acetyl-beta-D-glucosaminyl-(1-&gt;3)-beta-D-galactosyl-(1-&gt;4)-beta-D-glucosyl-(1&lt;-&gt;1')-N-acylsphing-4-enine + GDP + H(+). It carries out the reaction a neolactoside nLc4Cer(d18:1(4E)) + GDP-beta-L-fucose = a neolactoside IV(2)-alpha-Fuc-nLc4Cer(d18:1(4E)) + GDP + H(+). It catalyses the reaction a ganglioside GM1 + GDP-beta-L-fucose = a ganglioside Fuc-GM1 + GDP + H(+). The catalysed reaction is beta-D-galactosyl-(1-&gt;3)-N-acetyl-D-galactosamine + GDP-beta-L-fucose = alpha-L-fucosyl-(1-&gt;2)-beta-D-galactosyl-(1-&gt;3)-N-acetyl-D-galactosamine + GDP + H(+). It functions in the pathway protein modification; protein glycosylation. In terms of biological role, catalyzes the transfer of L-fucose, from a guanosine diphosphate-beta-L-fucose, to the terminal galactose residue of glycoconjugates through an alpha(1,2) linkage leading to H antigen synthesis that is an intermediate substrate in the synthesis of ABO blood group antigens. H antigen is essential for maturation of the glomerular layer of the main olfactory bulb, in cell migration and early cell-cell contacts during tumor associated angiogenesis. Preferentially fucosylates soluble lactose and to a lesser extent fucosylates glycolipids gangliosides GA1 and GM1a. The polypeptide is Galactoside alpha-(1,2)-fucosyltransferase 1 (Leontocebus fuscicollis (Brown-mantled tamarin)).